A 136-amino-acid chain; its full sequence is Histone H3 (136 aa).

The interval M1 to R43 is disordered. The residue at position 5 (K5) is an N6-methylated lysine. K10 carries the post-translational modification N6-acetyllysine; alternate. K10 bears the N6-methylated lysine; alternate mark. S11 carries the phosphoserine modification. Position 12 is a phosphothreonine (T12). The residue at position 15 (K15) is an N6-acetyllysine. N6-acetyllysine; alternate occurs at positions 19 and 24. An N6-methylated lysine; alternate mark is found at K19 and K24. K28 bears the N6-methylated lysine mark. S29 is modified (phosphoserine). At K37 the chain carries N6-methylated lysine.

Belongs to the histone H3 family. As to quaternary structure, the nucleosome is a histone octamer containing two molecules each of H2A, H2B, H3 and H4 assembled in one H3-H4 heterotetramer and two H2A-H2B heterodimers. The octamer wraps approximately 147 bp of DNA. Post-translationally, acetylation is generally linked to gene activation. Can be acetylated to form H3K9ac, H3K14ac, H3K18ac and H3K23ac. H3K9ac could compete with H3K9me and prevent gene silencing. H3K9ac is restricted to euchromatin. Methylated to form mainly H3K4me, H3K9me, H3K18me, H3K23me, H3K27me and H3K36me. H3K4me1/2/3, H3K9me3, H3K27me3 and H3K36me1/2/3 are typical marks for euchromatin, whereas heterochromatic chromocenters are enriched in H3K9me1/2 and H3K27me1/2. H2BK143ub1 is probably prerequisite for H3K4me. In terms of processing, can be phosphorylated to form H3S10ph, H3T11ph and H3S28ph.

The protein resides in the nucleus. It localises to the chromosome. Core component of nucleosome. Nucleosomes wrap and compact DNA into chromatin, limiting DNA accessibility to the cellular machineries which require DNA as a template. Histones thereby play a central role in transcription regulation, DNA repair, DNA replication and chromosomal stability. DNA accessibility is regulated via a complex set of post-translational modifications of histones, also called histone code, and nucleosome remodeling. This Griffithsia japonica (Red alga) protein is Histone H3.